The following is a 452-amino-acid chain: Cobyrinate a,c-diamide synthase (452 aa).

A GATase cobBQ-type domain is found at 248 to 441 (RVAYALDAAF…LHIHFYQNPA (194 aa)). The active-site Nucleophile is Cys-330.

This sequence belongs to the CobB/CbiA family. Mg(2+) serves as cofactor.

It carries out the reaction cob(II)yrinate + 2 L-glutamine + 2 ATP + 2 H2O = cob(II)yrinate a,c diamide + 2 L-glutamate + 2 ADP + 2 phosphate + 2 H(+). Its pathway is cofactor biosynthesis; adenosylcobalamin biosynthesis; cob(II)yrinate a,c-diamide from sirohydrochlorin (anaerobic route): step 10/10. Functionally, catalyzes the ATP-dependent amidation of the two carboxylate groups at positions a and c of cobyrinate, using either L-glutamine or ammonia as the nitrogen source. In Listeria innocua serovar 6a (strain ATCC BAA-680 / CLIP 11262), this protein is Cobyrinate a,c-diamide synthase.